Consider the following 95-residue polypeptide: Co-chaperonin GroES (95 aa).

The protein belongs to the GroES chaperonin family. As to quaternary structure, heptamer of 7 subunits arranged in a ring. Interacts with the chaperonin GroEL.

It localises to the cytoplasm. Together with the chaperonin GroEL, plays an essential role in assisting protein folding. The GroEL-GroES system forms a nano-cage that allows encapsulation of the non-native substrate proteins and provides a physical environment optimized to promote and accelerate protein folding. GroES binds to the apical surface of the GroEL ring, thereby capping the opening of the GroEL channel. This Xanthomonas axonopodis pv. citri (strain 306) protein is Co-chaperonin GroES.